The chain runs to 402 residues: Phosphoglycerate kinase (402 aa).

Substrate is bound by residues 29-31 (DFN), arginine 45, 69-72 (HLGR), arginine 125, and arginine 158. Residues lysine 209, glutamate 331, and 357-360 (GGDT) contribute to the ATP site.

The protein belongs to the phosphoglycerate kinase family.

Its subcellular location is the cytoplasm. It carries out the reaction (2R)-3-phosphoglycerate + ATP = (2R)-3-phospho-glyceroyl phosphate + ADP. Its pathway is carbohydrate degradation; glycolysis; pyruvate from D-glyceraldehyde 3-phosphate: step 2/5. In Helicobacter pylori (strain J99 / ATCC 700824) (Campylobacter pylori J99), this protein is Phosphoglycerate kinase (pgk).